The chain runs to 204 residues: Probable GTP-binding protein EngB (204 aa).

An EngB-type G domain is found at 22–197 (GFPEIAFVGR…LAEFDNVLSI (176 aa)). GTP is bound by residues 30–37 (GRSNVGKS), 57–61 (GKTRQ), 75–78 (DLPG), 144–147 (NKVD), and 176–178 (FSA). Mg(2+) contacts are provided by serine 37 and threonine 59.

It belongs to the TRAFAC class TrmE-Era-EngA-EngB-Septin-like GTPase superfamily. EngB GTPase family. The cofactor is Mg(2+).

Its function is as follows. Necessary for normal cell division and for the maintenance of normal septation. The polypeptide is Probable GTP-binding protein EngB (Ruminiclostridium cellulolyticum (strain ATCC 35319 / DSM 5812 / JCM 6584 / H10) (Clostridium cellulolyticum)).